Here is a 205-residue protein sequence, read N- to C-terminus: Proteasome subunit beta (205 aa).

Residues 1 to 9 (MNQTENMEG) constitute a propeptide, removed in mature form; by autocatalysis. Threonine 10 (nucleophile) is an active-site residue.

Belongs to the peptidase T1B family. The 20S proteasome core is composed of 14 alpha and 14 beta subunits that assemble into four stacked heptameric rings, resulting in a barrel-shaped structure. The two inner rings, each composed of seven catalytic beta subunits, are sandwiched by two outer rings, each composed of seven alpha subunits. The catalytic chamber with the active sites is on the inside of the barrel. Has a gated structure, the ends of the cylinder being occluded by the N-termini of the alpha-subunits. Is capped at one or both ends by the proteasome regulatory ATPase, PAN.

Its subcellular location is the cytoplasm. The catalysed reaction is Cleavage of peptide bonds with very broad specificity.. The formation of the proteasomal ATPase PAN-20S proteasome complex, via the docking of the C-termini of PAN into the intersubunit pockets in the alpha-rings, triggers opening of the gate for substrate entry. Interconversion between the open-gate and close-gate conformations leads to a dynamic regulation of the 20S proteasome proteolysis activity. In terms of biological role, component of the proteasome core, a large protease complex with broad specificity involved in protein degradation. This Methanosphaera stadtmanae (strain ATCC 43021 / DSM 3091 / JCM 11832 / MCB-3) protein is Proteasome subunit beta.